The following is a 1248-amino-acid chain: Structural maintenance of chromosomes protein 1B (1248 aa).

Position 32–39 (32–39) interacts with ATP; that stretch reads GPNGSGKS. The stretch at 163-502 forms a coiled coil; that stretch reads EFIGEYEAKK…EGKRQQKRAE (340 aa). The SMC hinge domain maps to 514–629; it reads SVFGRLLDLC…ETVEEARHIA (116 aa). Lys648, Lys713, and Lys1032 each carry N6-acetyllysine. The stretch at 666-912 forms a coiled coil; it reads WDEKELHNLR…REVGKLQKEV (247 aa). Residues 1219–1228 are compositionally biased toward basic and acidic residues; the sequence is PDTEDQEGSR. Positions 1219–1248 are disordered; sequence PDTEDQEGSRSHRKPRVPRVSMSPKSPQSR.

Belongs to the SMC family. SMC1 subfamily. In terms of assembly, forms a heterodimer with SMC3. Component of a meiosis-specific cohesin complex, probably composed of the SMC1B and SMC3 heterodimer attached via their SMC hinge domain, RAD21 (or its meiosis-specific related protein REC8), which link them, and STAG3, which interacts with RAD21 or REC8. The cohesin complex interacts with the cohesin loading complex subunits NIPBL/Scc2 (via HEAT repeats) and MAU2/Scc4. NIPBL directly contacts all members of the complex, RAD21, SMC1A/B, SMC3 and STAG1. Spermatocytes (at protein level). Testis and ovary specific. Not expressed in somatic cells.

The protein localises to the nucleus. Its subcellular location is the chromosome. It is found in the centromere. Its function is as follows. Meiosis-specific component of cohesin complex. Required for the maintenance of meiotic cohesion, but not, or only to a minor extent, for its establishment. Contributes to axial element (AE) formation and the organization of chromatin loops along the AE. Plays a key role in synapsis, recombination and chromosome movements. The cohesin complex is required for the cohesion of sister chromatids after DNA replication. The cohesin complex apparently forms a large proteinaceous ring within which sister chromatids can be trapped. At anaphase, the complex is cleaved and dissociates from chromatin, allowing sister chromatids to segregate. The meiosis-specific cohesin complex probably replaces mitosis specific cohesin complex when it dissociates from chromatin during prophase I. This chain is Structural maintenance of chromosomes protein 1B (Smc1b), found in Mus musculus (Mouse).